Reading from the N-terminus, the 236-residue chain is ATP synthase subunit a, chloroplastic (236 aa).

The next 5 helical transmembrane spans lie at 25 to 45 (MHGQVLINSWIVLGLIIAFAV), 87 to 107 (FIGTLFLFIFVSNWSGALIPW), 123 to 143 (DINTTVALALLTSLTYFYAGL), 180 to 202 (LFGNILADELVVAVLVSLVPLVI), and 210 to 230 (GLFTSGIQALIFATLAGAYIG).

Belongs to the ATPase A chain family. F-type ATPases have 2 components, CF(1) - the catalytic core - and CF(0) - the membrane proton channel. CF(1) has five subunits: alpha(3), beta(3), gamma(1), delta(1), epsilon(1). CF(0) has four main subunits: a, b, b' and c.

It is found in the plastid. Its subcellular location is the chloroplast thylakoid membrane. Its function is as follows. Key component of the proton channel; it plays a direct role in the translocation of protons across the membrane. The sequence is that of ATP synthase subunit a, chloroplastic from Ostreococcus tauri.